The chain runs to 336 residues: Alcohol dehydrogenase (336 aa).

Residues cysteine 37, histidine 58, cysteine 89, cysteine 92, cysteine 95, cysteine 103, and cysteine 145 each contribute to the Zn(2+) site.

Belongs to the zinc-containing alcohol dehydrogenase family. The cofactor is Zn(2+).

The enzyme catalyses a primary alcohol + NAD(+) = an aldehyde + NADH + H(+). The catalysed reaction is a secondary alcohol + NAD(+) = a ketone + NADH + H(+). This Staphylococcus aureus (strain USA300) protein is Alcohol dehydrogenase (adh).